A 150-amino-acid chain; its full sequence is Linear element protein rec25 (150 aa).

Position 11 is a phosphoserine (Ser-11).

Component of linear elements (LinEs), which are similar to synaptonemal complexes, at least composed of rec27, rec25, rec10 and mug20. Interacts with rec10; the interaction is direct.

It localises to the cytoplasm. The protein resides in the nucleus. It is found in the chromosome. Its function is as follows. During meiotic DNA recombination, binds to and may help activate DNA double-strand break (DSB) hotspot sites. This is Linear element protein rec25 from Schizosaccharomyces pombe (strain 972 / ATCC 24843) (Fission yeast).